The primary structure comprises 83 residues: RNA-binding protein Hfq (83 aa).

The 60-residue stretch at 10-69 (DPFLNALRREHVPVSIYLVNGIKLQGQIESFDQYVVLLRNTVTQMVYKHAISTIVPGRAV) folds into the Sm domain.

The protein belongs to the Hfq family. Homohexamer.

Functionally, RNA chaperone that binds small regulatory RNA (sRNAs) and mRNAs to facilitate mRNA translational regulation in response to envelope stress, environmental stress and changes in metabolite concentrations. Also binds with high specificity to tRNAs. In Acidovorax ebreus (strain TPSY) (Diaphorobacter sp. (strain TPSY)), this protein is RNA-binding protein Hfq.